The primary structure comprises 61 residues: LECHNQQSSQPPTTKSCPGDTNCYNKRWRDHRGTIIERGCGCPTVKPGINLKCCTTDRCNN.

Residues 1 to 16 (LECHNQQSSQPPTTKS) show a composition bias toward polar residues. Residues 1-20 (LECHNQQSSQPPTTKSCPGD) are disordered. 4 disulfide bridges follow: Cys3-Cys23, Cys17-Cys40, Cys42-Cys53, and Cys54-Cys59.

The protein belongs to the three-finger toxin family. Short-chain subfamily. Type I alpha-neurotoxin sub-subfamily. In terms of tissue distribution, expressed by the venom gland.

The protein resides in the secreted. Binds to muscle nicotinic acetylcholine receptor (nAChR) and inhibit acetylcholine from binding to the receptor, thereby impairing neuromuscular transmission. The chain is Short neurotoxin 1 from Hemachatus haemachatus (Rinkhals).